Reading from the N-terminus, the 202-residue chain is uncharacterized protein (202 aa).

Residues 1–19 form the signal peptide; the sequence is MRRKNGFSVASVFILCSIA. The chain crosses the membrane as a helical span at residues 177–199; the sequence is FLASSSSSFSSFLPSIAIILFFV.

Its subcellular location is the membrane. This is an uncharacterized protein from Caenorhabditis elegans.